A 263-amino-acid polypeptide reads, in one-letter code: tRNA pseudouridine synthase A (263 aa).

Asp57 functions as the Nucleophile in the catalytic mechanism. Residue Tyr115 participates in substrate binding.

This sequence belongs to the tRNA pseudouridine synthase TruA family. Homodimer.

The catalysed reaction is uridine(38/39/40) in tRNA = pseudouridine(38/39/40) in tRNA. Formation of pseudouridine at positions 38, 39 and 40 in the anticodon stem and loop of transfer RNAs. This chain is tRNA pseudouridine synthase A, found in Buchnera aphidicola subsp. Schizaphis graminum (strain Sg).